A 290-amino-acid chain; its full sequence is Endo-1,4-beta-xylanase B (290 aa).

The N-terminal stretch at 1-19 is a signal peptide; it reads MVSFNSLLVAVSAATCALA. N-linked (GlcNAc...) asparagine glycosylation occurs at asparagine 26. Residues 34-222 form the GH11 domain; that stretch reads QSTPAGTGTN…SSGSSTVTVN (189 aa). Glutamate 118 acts as the Nucleophile in catalysis. The active-site Proton donor is glutamate 209. The disordered stretch occupies residues 223-248; sequence PAGGVTSPIAPTGPSSVSTTPSGPSS. Residues 234–248 show a composition bias toward low complexity; that stretch reads TGPSSVSTTPSGPSS. Residues 255–290 form the CBM1 domain; sequence TCSALYGQCGGQGWTGPTCCSSGTCKFSNNWYSQCL.

Belongs to the glycosyl hydrolase 11 (cellulase G) family.

It localises to the secreted. The enzyme catalyses Endohydrolysis of (1-&gt;4)-beta-D-xylosidic linkages in xylans.. Its pathway is glycan degradation; xylan degradation. In terms of biological role, endo-1,4-beta-xylanase involved in the hydrolysis of xylan, a major structural heterogeneous polysaccharide found in plant biomass representing the second most abundant polysaccharide in the biosphere, after cellulose. The protein is Endo-1,4-beta-xylanase B (xynB) of Phanerodontia chrysosporium (White-rot fungus).